We begin with the raw amino-acid sequence, 211 residues long: Protein YCF54, chloroplastic (211 aa).

Residues 1–80 constitute a chloroplast transit peptide; that stretch reads MWSVTGALTV…GESTKYHFLV (80 aa).

Belongs to the ycf54 family. In terms of assembly, interacts with LFNR1 and CRD1/CHL27 in chloroplasts.

The protein resides in the plastid. It is found in the chloroplast. Involved in the biosynthesis of chlorophyll; acts probably as a scaffolding factor in the MgProto monomethylester (MgProtoME) cyclase complex to stabilize CRD1/CHL27, the catalytic subunit which catalyzes the formation of a fifth isocyclic ring to tetrapyrroles to form protochlorophyllide. The protein is Protein YCF54, chloroplastic of Arabidopsis thaliana (Mouse-ear cress).